Here is a 385-residue protein sequence, read N- to C-terminus: 1-deoxy-D-xylulose 5-phosphate reductoisomerase 1 (385 aa).

NADPH contacts are provided by Thr-11, Gly-12, Ser-13, Ile-14, Asn-39, and Asn-122. Lys-123 provides a ligand contact to 1-deoxy-D-xylulose 5-phosphate. Glu-124 is a binding site for NADPH. Asp-148 is a Mn(2+) binding site. 1-deoxy-D-xylulose 5-phosphate-binding residues include Ser-149, Glu-150, Ser-174, and His-197. A Mn(2+)-binding site is contributed by Glu-150. Gly-203 is an NADPH binding site. Residues Ser-210, Asn-215, Lys-216, and Glu-219 each contribute to the 1-deoxy-D-xylulose 5-phosphate site. Glu-219 is a Mn(2+) binding site.

It belongs to the DXR family. Mg(2+) is required as a cofactor. The cofactor is Mn(2+).

It catalyses the reaction 2-C-methyl-D-erythritol 4-phosphate + NADP(+) = 1-deoxy-D-xylulose 5-phosphate + NADPH + H(+). The protein operates within isoprenoid biosynthesis; isopentenyl diphosphate biosynthesis via DXP pathway; isopentenyl diphosphate from 1-deoxy-D-xylulose 5-phosphate: step 1/6. In terms of biological role, catalyzes the NADPH-dependent rearrangement and reduction of 1-deoxy-D-xylulose-5-phosphate (DXP) to 2-C-methyl-D-erythritol 4-phosphate (MEP). The sequence is that of 1-deoxy-D-xylulose 5-phosphate reductoisomerase 1 from Bacillus anthracis.